A 438-amino-acid polypeptide reads, in one-letter code: 2-(3-amino-3-carboxypropyl)histidine synthase subunit 1 (438 aa).

Residues serine 7–alanine 29 are disordered. Positions 110, 214, and 342 each coordinate [4Fe-4S] cluster. The interval valine 391 to valine 421 is disordered.

Belongs to the DPH1/DPH2 family. DPH1 subfamily. As to quaternary structure, component of the 2-(3-amino-3-carboxypropyl)histidine synthase complex composed of DPH1, DPH2, DPH3 and a NADH-dependent reductase. Interacts with DPH2. Interacts with RBM8A. [4Fe-4S] cluster serves as cofactor. As to expression, expressed in heart, brain, placenta, lung, liver, skeletal muscle, kidney, pancreas, spleen, thymus, mammary gland, colon, small intestine, testis and ovary. Reduced expression in primary breast and ovarian tumors.

The protein resides in the nucleus. The protein localises to the cytoplasm. It carries out the reaction L-histidyl-[translation elongation factor 2] + S-adenosyl-L-methionine = 2-[(3S)-amino-3-carboxypropyl]-L-histidyl-[translation elongation factor 2] + S-methyl-5'-thioadenosine + H(+). The protein operates within protein modification; peptidyl-diphthamide biosynthesis. In terms of biological role, catalyzes the first step of diphthamide biosynthesis, a post-translational modification of histidine which occurs in elongation factor 2. DPH1 and DPH2 transfer a 3-amino-3-carboxypropyl (ACP) group from S-adenosyl-L-methionine (SAM) to a histidine residue, the reaction is assisted by a reduction system comprising DPH3 and a NADH-dependent reductase. Acts as a tumor suppressor. This Homo sapiens (Human) protein is 2-(3-amino-3-carboxypropyl)histidine synthase subunit 1.